Reading from the N-terminus, the 161-residue chain is Chaperone protein dnaJ 11, chloroplastic (161 aa).

A compositionally biased stretch (low complexity) spans 1 to 18 (MLSSSPTSFTHPFLSSSP). The segment at 1-31 (MLSSSPTSFTHPFLSSSPPLSPISPPSRTAR) is disordered. The transit peptide at 1 to 36 (MLSSSPTSFTHPFLSSSPPLSPISPPSRTARISPPL) directs the protein to the chloroplast. The J domain occupies 65–133 (SLYDVLEVPL…EKRSVYDRRM (69 aa)).

It belongs to the DnaJ family. C/III subfamily. As to expression, expressed in roots, stems, leaves, flowers and developing siliques.

The protein localises to the plastid. Its subcellular location is the chloroplast stroma. Its function is as follows. Plays a continuous role in plant development probably in the structural organization of compartments. This chain is Chaperone protein dnaJ 11, chloroplastic (ATJ11), found in Arabidopsis thaliana (Mouse-ear cress).